An 8903-amino-acid polypeptide reads, in one-letter code: Nonribosomal peptide synthetase vlms (8903 aa).

The Carrier 1 domain maps to 11 to 84 (GSCRTTLGKV…ELADSIDEQN (74 aa)). Residues 13-81 (CRTTLGKVAA…TLAELADSID (69 aa)) are thiolation (T) domain 1. Ser45 carries the post-translational modification O-(pantetheine 4'-phosphoryl)serine. 2 adenylation (A) domain regions span residues 59-736 (GIWV…SHLP) and 989-1386 (MAAQ…IKIR). The interval 572–953 (VPHQLDTEKL…FLLDGVNMSI (382 aa)) is condensation (C) domain 1. In terms of domain architecture, Carrier 2 spans 1524 to 1600 (SSMSTVEQEL…QLALAAESQA (77 aa)). The segment at 1529–1597 (VEQELRQIWS…TIPQLALAAE (69 aa)) is thiolation (T) domain 2. Ser1561 bears the O-(pantetheine 4'-phosphoryl)serine mark. Residues 1613–2050 (FPLSPIQKMY…TVKELAAVSA (438 aa)) are epimerase (E) domain 1. Residues 2091 to 2523 (DILPCSPIQQ…LLSVSEENKL (433 aa)) form a condensation (C) domain 2 region. The segment at 2546–2943 (MSSHADATAI…GRQDSQVKIR (398 aa)) is adenylation (A) domain 2. One can recognise a Carrier 3 domain in the interval 3084–3160 (LFTTAIERQL…ELALQAKMVD (77 aa)). Positions 3089–3157 (IERQLRQVWS…TIPELALQAK (69 aa)) are thiolation (T) domain 3. At Ser3121 the chain carries O-(pantetheine 4'-phosphoryl)serine. The interval 3174–3614 (FALSPIQQMY…AIKSLVEELM (441 aa)) is epimerase (E) domain 2. The segment at 3655 to 4093 (EDILPCSPMQ…LMSTKDIQQL (439 aa)) is condensation (C) domain 3. Residues 4114-4512 (ERLNTQPESM…GRIDTQIKIR (399 aa)) are adenylation (A) domain 3. The Carrier 4 domain occupies 4649–4725 (APRTTMEKKL…DLAEATELKC (77 aa)). Residues 4654-4722 (MEKKLRDLFA…ILADLAEATE (69 aa)) form a thiolation (T) domain 4 region. An O-(pantetheine 4'-phosphoryl)serine modification is found at Ser4686. The interval 4775 to 5191 (EDVYPCSPLQ…AQLQMLSEED (417 aa)) is condensation (C) domain 4. Residues 5216-5614 (ETMTSQPDAP…GRRDTQVKIR (399 aa)) are adenylation (A) domain 4. The 77-residue stretch at 5753–5829 (APTTAMEKRL…DLAQELEQRH (77 aa)) folds into the Carrier 5 domain. The segment at 5758–5826 (MEKRLQNLFC…RLGDLAQELE (69 aa)) is thiolation (T) domain 5. The residue at position 5790 (Ser5790) is an O-(pantetheine 4'-phosphoryl)serine. Position 5875 (Glu5875) is a region of interest, condensation (C) domain 5. The adenylation (A) domain 5 stretch occupies residues 6311–6702 (EEQMSLRPSE…GRMDGQIKIR (392 aa)). Positions 6836 to 6912 (SSATNTERQL…ELAATLEVMD (77 aa)) constitute a Carrier 6 domain. Positions 6841–6909 (TERQLRQIWS…TIPELAATLE (69 aa)) are thiolation (T) domain 6. Position 6873 is an O-(pantetheine 4'-phosphoryl)serine (Ser6873). The tract at residues 6923-7349 (GFFELSPIQR…YGRTIKTLVE (427 aa)) is epimerase (E) domain 3. Positions 7391–7823 (EDILPCSPIQ…LVLTNDEAQI (433 aa)) are condensation (C) domain 6. The tract at residues 7844–8240 (EQMARKPEAQ…LDRIGTQVKI (397 aa)) is adenylation (A) domain 6. A Carrier 7 domain is found at 8368 to 8444 (APISATEAVF…AMAACVSDVS (77 aa)). The thiolation (T) domain 7 stretch occupies residues 8369-8441 (PISATEAVFC…VLHAMAACVS (73 aa)). Ser8405 carries the post-translational modification O-(pantetheine 4'-phosphoryl)serine. A condensation (C) domain 7 region spans residues 8482–8897 (DVLPTTEFQT…MENPRSTVGH (416 aa)).

This sequence belongs to the NRP synthetase family.

Its pathway is secondary metabolite biosynthesis. Its function is as follows. Nonribosomal peptide synthetase; part of the gene cluster that mediates the biosynthesis of verlamelin, a lipopeptide that exhibits antifungal activity against plant pathogenic fungi. Verlamelin is a cyclic hexadepsipeptide and is bridged by ester bonding between a 5-hydroxytetradecanoic acid moiety and a carboxyl group on the terminal Val of amide-bonded tetradecanoyl-hexapeptide D-allo-Thr-D-Ala-L-Pro-L-Gln-D-Tyr-L-Val. VlmA and vlmB are altogether regarded as essential components in the biosynthesis of 5-hydroxytetradecanoic acid. VlmA catalyzes the hydroxylation at position C5 of tetradecanoic acid produced in primary metabolism, while the precise function of vlmB still remains to be solved. To be loaded onto the waiting NRPS, 5-hydroxytetradecanoic acid is activated in the form of acyladenylate by the AMP-dependent ligase vlmC. VlmS seems to accept the fatty-acyl intermediate onto the initial module to further elongate amino acid residues by the downstream modules. In addition, in the last module at its C-terminus, vlmS contains a surplus condensation (C) domain that may be involved in cyclization, the last step to form verlamelin. The protein is Nonribosomal peptide synthetase vlms of Lecanicillium sp.